A 344-amino-acid chain; its full sequence is DNA-directed RNA polymerase subunit alpha (344 aa).

The segment at 1-238 (MKVIKTAPLI…KQLGVFGERP (238 aa)) is alpha N-terminal domain (alpha-NTD). Positions 254-344 (AKDLSAKIES…EKLEDKGGND (91 aa)) are alpha C-terminal domain (alpha-CTD).

This sequence belongs to the RNA polymerase alpha chain family. Homodimer. The RNAP catalytic core consists of 2 alpha, 1 beta, 1 beta' and 1 omega subunit. When a sigma factor is associated with the core the holoenzyme is formed, which can initiate transcription.

It carries out the reaction RNA(n) + a ribonucleoside 5'-triphosphate = RNA(n+1) + diphosphate. DNA-dependent RNA polymerase catalyzes the transcription of DNA into RNA using the four ribonucleoside triphosphates as substrates. The polypeptide is DNA-directed RNA polymerase subunit alpha (Helicobacter pylori (strain ATCC 700392 / 26695) (Campylobacter pylori)).